A 384-amino-acid chain; its full sequence is Acetylornithine aminotransferase (384 aa).

Pyridoxal 5'-phosphate contacts are provided by residues 94 to 95 (GT) and F121. N(2)-acetyl-L-ornithine is bound at residue R124. 206 to 209 (DEVQ) is a binding site for pyridoxal 5'-phosphate. N6-(pyridoxal phosphate)lysine is present on K235. S263 is a binding site for N(2)-acetyl-L-ornithine. T264 is a binding site for pyridoxal 5'-phosphate.

This sequence belongs to the class-III pyridoxal-phosphate-dependent aminotransferase family. ArgD subfamily. In terms of assembly, homodimer. Pyridoxal 5'-phosphate serves as cofactor.

It localises to the cytoplasm. It catalyses the reaction N(2)-acetyl-L-ornithine + 2-oxoglutarate = N-acetyl-L-glutamate 5-semialdehyde + L-glutamate. It participates in amino-acid biosynthesis; L-arginine biosynthesis; N(2)-acetyl-L-ornithine from L-glutamate: step 4/4. This chain is Acetylornithine aminotransferase, found in Listeria innocua serovar 6a (strain ATCC BAA-680 / CLIP 11262).